We begin with the raw amino-acid sequence, 346 residues long: Very-long-chain 3-oxoacyl-CoA reductase (346 aa).

A helical transmembrane segment spans residues 23-43 (AAWIVFGLGISKMVFLTLNFS). 7 residues coordinate NADP(+): Val69, Asp123, Asn150, Tyr222, Lys226, Val255, and Ser257. The Proton donor role is filled by Tyr222. The active-site Lowers pKa of active site Tyr is Lys226.

The protein belongs to the short-chain dehydrogenases/reductases (SDR) family.

The protein localises to the endoplasmic reticulum membrane. The catalysed reaction is a very-long-chain (3R)-3-hydroxyacyl-CoA + NADP(+) = a very-long-chain 3-oxoacyl-CoA + NADPH + H(+). It functions in the pathway lipid metabolism; fatty acid biosynthesis. Its function is as follows. Component of the microsomal membrane bound fatty acid elongation system, which produces the 26-carbon very long-chain fatty acids (VLCFA) from palmitate. Catalyzes the reduction of the 3-ketoacyl-CoA intermediate that is formed in each cycle of fatty acid elongation. VLCFAs serve as precursors for ceramide and sphingolipids. This is Very-long-chain 3-oxoacyl-CoA reductase from Kluyveromyces lactis (strain ATCC 8585 / CBS 2359 / DSM 70799 / NBRC 1267 / NRRL Y-1140 / WM37) (Yeast).